Here is a 284-residue protein sequence, read N- to C-terminus: Putative L-ribulose-5-phosphate 3-epimerase UlaE (284 aa).

This sequence belongs to the L-ribulose-5-phosphate 3-epimerase family.

It catalyses the reaction L-ribulose 5-phosphate = L-xylulose 5-phosphate. It participates in cofactor degradation; L-ascorbate degradation; D-xylulose 5-phosphate from L-ascorbate: step 3/4. Functionally, catalyzes the isomerization of L-xylulose-5-phosphate to L-ribulose-5-phosphate. Is involved in the anaerobic L-ascorbate utilization. This Shigella dysenteriae serotype 1 (strain Sd197) protein is Putative L-ribulose-5-phosphate 3-epimerase UlaE.